The sequence spans 372 residues: tRNA-specific 2-thiouridylase MnmA (372 aa).

ATP is bound by residues 16 to 23 (GMSGGVDS) and Met-42. An interaction with target base in tRNA region spans residues 102–104 (NPD). Cys-107 (nucleophile) is an active-site residue. Cys-107 and Cys-205 are oxidised to a cystine. Gly-132 is an ATP binding site. The interval 155 to 157 (KDQ) is interaction with tRNA. Cys-205 serves as the catalytic Cysteine persulfide intermediate. The segment at 317–318 (RY) is interaction with tRNA.

It belongs to the MnmA/TRMU family.

The protein resides in the cytoplasm. It catalyses the reaction S-sulfanyl-L-cysteinyl-[protein] + uridine(34) in tRNA + AH2 + ATP = 2-thiouridine(34) in tRNA + L-cysteinyl-[protein] + A + AMP + diphosphate + H(+). Its function is as follows. Catalyzes the 2-thiolation of uridine at the wobble position (U34) of tRNA, leading to the formation of s(2)U34. The sequence is that of tRNA-specific 2-thiouridylase MnmA from Shewanella sp. (strain MR-7).